A 481-amino-acid polypeptide reads, in one-letter code: Proline--tRNA ligase (481 aa).

Belongs to the class-II aminoacyl-tRNA synthetase family. ProS type 3 subfamily. In terms of assembly, homodimer.

It is found in the cytoplasm. It catalyses the reaction tRNA(Pro) + L-proline + ATP = L-prolyl-tRNA(Pro) + AMP + diphosphate. Functionally, catalyzes the attachment of proline to tRNA(Pro) in a two-step reaction: proline is first activated by ATP to form Pro-AMP and then transferred to the acceptor end of tRNA(Pro). This Pelodictyon phaeoclathratiforme (strain DSM 5477 / BU-1) protein is Proline--tRNA ligase.